Reading from the N-terminus, the 493-residue chain is 3-octaprenyl-4-hydroxybenzoate carboxy-lyase (493 aa).

Asn175 provides a ligand contact to Mn(2+). Prenylated FMN-binding positions include 178-180, 192-194, and 197-198; these read IYR, RWL, and RG. Glu241 contributes to the Mn(2+) binding site. Asp290 (proton donor) is an active-site residue.

This sequence belongs to the UbiD family. Homohexamer. Prenylated FMN is required as a cofactor. It depends on Mn(2+) as a cofactor.

The protein resides in the cell membrane. The catalysed reaction is a 4-hydroxy-3-(all-trans-polyprenyl)benzoate + H(+) = a 2-(all-trans-polyprenyl)phenol + CO2. It functions in the pathway cofactor biosynthesis; ubiquinone biosynthesis. Functionally, catalyzes the decarboxylation of 3-octaprenyl-4-hydroxy benzoate to 2-octaprenylphenol, an intermediate step in ubiquinone biosynthesis. The sequence is that of 3-octaprenyl-4-hydroxybenzoate carboxy-lyase from Photorhabdus laumondii subsp. laumondii (strain DSM 15139 / CIP 105565 / TT01) (Photorhabdus luminescens subsp. laumondii).